The following is a 108-amino-acid chain: UPF0060 membrane protein Msil_1658 (108 aa).

The next 4 helical transmembrane spans lie at 5 to 25, 31 to 51, 62 to 82, and 88 to 108; these read LVYV…WAWL, SLWL…LTLI, AYGG…EGVW, and LGGA…PRPA.

It belongs to the UPF0060 family.

It is found in the cell inner membrane. The sequence is that of UPF0060 membrane protein Msil_1658 from Methylocella silvestris (strain DSM 15510 / CIP 108128 / LMG 27833 / NCIMB 13906 / BL2).